The primary structure comprises 280 residues: Energy-coupling factor transporter ATP-binding protein EcfA1 (280 aa).

The ABC transporter domain maps to 6–241; that stretch reads IELKNVTFRY…GDELLDLGLD (236 aa). Position 41-48 (41-48) interacts with ATP; the sequence is GHNGSGKS.

It belongs to the ABC transporter superfamily. Energy-coupling factor EcfA family. In terms of assembly, forms a stable energy-coupling factor (ECF) transporter complex composed of 2 membrane-embedded substrate-binding proteins (S component), 2 ATP-binding proteins (A component) and 2 transmembrane proteins (T component).

Its subcellular location is the cell membrane. Its function is as follows. ATP-binding (A) component of a common energy-coupling factor (ECF) ABC-transporter complex. Unlike classic ABC transporters this ECF transporter provides the energy necessary to transport a number of different substrates. The protein is Energy-coupling factor transporter ATP-binding protein EcfA1 of Streptococcus mutans serotype c (strain ATCC 700610 / UA159).